A 757-amino-acid polypeptide reads, in one-letter code: Catalase-peroxidase (757 aa).

Positions 101–248 form a cross-link, tryptophyl-tyrosyl-methioninium (Trp-Tyr) (with M-274); sequence WHSAGTYRIG…LAAVQMGLIY (148 aa). The active-site Proton acceptor is H102. Residues 213–232 form a disordered region; the sequence is VHHPDEHRGAKEKASKNSDS. Positions 248–274 form a cross-link, tryptophyl-tyrosyl-methioninium (Tyr-Met) (with W-101); sequence YVNPEGPDGCPDPLASARDIRETFARM. H289 is a heme b binding site.

This sequence belongs to the peroxidase family. Peroxidase/catalase subfamily. As to quaternary structure, homodimer or homotetramer. Heme b is required as a cofactor. In terms of processing, formation of the three residue Trp-Tyr-Met cross-link is important for the catalase, but not the peroxidase activity of the enzyme.

It catalyses the reaction H2O2 + AH2 = A + 2 H2O. The catalysed reaction is 2 H2O2 = O2 + 2 H2O. Functionally, bifunctional enzyme with both catalase and broad-spectrum peroxidase activity. This chain is Catalase-peroxidase, found in Xylella fastidiosa (strain M23).